The chain runs to 261 residues: Expansin-B2 (261 aa).

The N-terminal stretch at 1-24 (MAGASAKVVAMLLSVLATYGFAAG) is a signal peptide. The Expansin-like EG45 domain occupies 51–157 (GGACGFKNTN…RRVPCYHRGL (107 aa)). 3 cysteine pairs are disulfide-bonded: cysteine 54–cysteine 82, cysteine 85–cysteine 152, and cysteine 90–cysteine 96. An Expansin-like CBD domain is found at 170–256 (VYLAVLVEFA…NWRANTNYGS (87 aa)).

The protein belongs to the expansin family. Expansin B subfamily. Expressed in roots.

It localises to the secreted. Its subcellular location is the cell wall. It is found in the membrane. Its function is as follows. May cause loosening and extension of plant cell walls by disrupting non-covalent bonding between cellulose microfibrils and matrix glucans. No enzymatic activity has been found. May be required for rapid internodal elongation in deepwater rice during submergence. In Oryza sativa subsp. japonica (Rice), this protein is Expansin-B2 (EXPB2).